Here is a 2294-residue protein sequence, read N- to C-terminus: Protein Ycf2 (2294 aa).

1648-1655 (GSIGTGRS) is an ATP binding site.

This sequence belongs to the Ycf2 family.

The protein localises to the plastid. It localises to the chloroplast stroma. Functionally, probable ATPase of unknown function. Its presence in a non-photosynthetic plant (Epifagus virginiana) and experiments in tobacco indicate that it has an essential function which is probably not related to photosynthesis. The polypeptide is Protein Ycf2 (Arabidopsis thaliana (Mouse-ear cress)).